The sequence spans 250 residues: 3-deoxy-manno-octulosonate cytidylyltransferase (250 aa).

Belongs to the KdsB family.

The protein localises to the cytoplasm. The enzyme catalyses 3-deoxy-alpha-D-manno-oct-2-ulosonate + CTP = CMP-3-deoxy-beta-D-manno-octulosonate + diphosphate. The protein operates within nucleotide-sugar biosynthesis; CMP-3-deoxy-D-manno-octulosonate biosynthesis; CMP-3-deoxy-D-manno-octulosonate from 3-deoxy-D-manno-octulosonate and CTP: step 1/1. It participates in bacterial outer membrane biogenesis; lipopolysaccharide biosynthesis. Its function is as follows. Activates KDO (a required 8-carbon sugar) for incorporation into bacterial lipopolysaccharide in Gram-negative bacteria. The sequence is that of 3-deoxy-manno-octulosonate cytidylyltransferase from Pectobacterium atrosepticum (strain SCRI 1043 / ATCC BAA-672) (Erwinia carotovora subsp. atroseptica).